The sequence spans 406 residues: Peptidase T (406 aa).

H81 contributes to the Zn(2+) binding site. The active site involves D83. D142 lines the Zn(2+) pocket. The active-site Proton acceptor is E176. Zn(2+) is bound by residues E177, D199, and H381.

The protein belongs to the peptidase M20B family. Zn(2+) is required as a cofactor.

It is found in the cytoplasm. The enzyme catalyses Release of the N-terminal residue from a tripeptide.. Functionally, cleaves the N-terminal amino acid of tripeptides. In Streptococcus suis (strain 98HAH33), this protein is Peptidase T.